Reading from the N-terminus, the 336-residue chain is MSRVTLSRYLIEQTRSNNTPADLRFLIEVVARACKEISHAVSKGALGGVLGSMGTENVQGEVQKKLDVISNEILLEANEWGGHLAGMASEEMDNAYQIPGKYPKGAYLLVFDPLDGSSNIDINAPVGTIFSVLRCPNEYLSQNEALNEKAFLQPGTEQVAAGYAIYGPQTMLVLTLGDGVKGFTLDREMGSFVLTHEDITIPESTQEFAVNMSNQRHWEAPVQRYVSELLAGEDGPLKKNYNMRWVAAMVADVHRILTRGGLFMYPRDSREPSKPGKLRLMYEANPMSFLVEQAGGASTDGHQRILDIQPEGLHQRVAVYLGSKEEVERATAYHKA.

Mg(2+) is bound by residues Glu-90, Asp-112, Leu-114, and Asp-115. Substrate contacts are provided by residues 115–118 (DGSS), Asn-211, and Lys-277. Mg(2+) is bound at residue Glu-283.

Belongs to the FBPase class 1 family. Homotetramer. Requires Mg(2+) as cofactor.

The protein localises to the cytoplasm. It catalyses the reaction beta-D-fructose 1,6-bisphosphate + H2O = beta-D-fructose 6-phosphate + phosphate. Its pathway is carbohydrate biosynthesis; gluconeogenesis. This is Fructose-1,6-bisphosphatase class 1 from Pseudomonas syringae pv. syringae (strain B728a).